Here is a 431-residue protein sequence, read N- to C-terminus: MQNIHFIGIGGIGISALARFLKEKGFKISGSDLKESKITKELEKEGVKVSIPHHKDNILNKDLVIYSAAIKEENPEFKHAKELGIKCLSRKEALPLILEDKRVFAVAGAHGKSTTSSILASLLDDASVIIGAILKEFGSNMIYKESQNLVFEADESDSSFLNSNPYLAIVTNAEAEHLDHYGNEVSKLHHAYAEFLDTAKIRVINAEDEFLKNYKNESTKLYPSKDIKNCTMRIENFKPFTSFELKDLGEFKVFGMGYHLALDASLAILAALNFLDIETIRTRLKNYQGIKKRFDILYADENLVLIDDYGHHPTEIKATLSAAQEYAKLGGYKKITAIFEPHRYTRLAANLKEFAKAFESIDELVILPVYAAGEEPIELDLKAVFPKALFVEDIKREGRFLVASKGQVFEEGLIIGFGAGDISNKLRQKDE.

Position 108-114 (108-114 (GAHGKST)) interacts with ATP.

Belongs to the MurCDEF family.

Its subcellular location is the cytoplasm. It carries out the reaction UDP-N-acetyl-alpha-D-muramate + L-alanine + ATP = UDP-N-acetyl-alpha-D-muramoyl-L-alanine + ADP + phosphate + H(+). Its pathway is cell wall biogenesis; peptidoglycan biosynthesis. Its function is as follows. Cell wall formation. The sequence is that of UDP-N-acetylmuramate--L-alanine ligase from Campylobacter jejuni (strain RM1221).